The chain runs to 408 residues: MSPCENDTPINWKRNLIVAWLGCFLTGAAFSLVMPFLPLYVEQLGVTGHSALNMWSGIVFSITFLFSAIASPFWGGLADRKGRKIMLLRSALGMGIVMVLMGLAQNIWQFLILRALLGLLGGFVPNANALIATQVPRNKSGWALGTLSTGGVSGALLGPMAGGLLADSYGLRPVFFITASVLILCFFVTLFCIREKFQPVSKKEMLHMREVVTSLKNPKLVLSLFVTTLIIQVATGSIAPILTLYVRELAGNVSNVAFISGMIASVPGVAALLSAPRLGKLGDRIGPEKILITALIFSVLLLIPMSYVQTPLQLGILRFLLGAADGALLPAVQTLLVYNSSNQIAGRIFSYNQSFRDIGNVTGPLMGAAISANYGFRAVFLVTAGVVLFNAVYSWNSLRRRRIPQISN.

11 consecutive transmembrane segments (helical) span residues 16–36, 58–78, 92–112, 115–135, 146–166, 173–193, 224–244, 256–276, 290–310, 319–339, and 378–398; these read LIVA…VMPF, IVFS…GGLA, LGMG…QFLI, ALLG…ATQV, TLST…GLLA, PVFF…LFCI, LFVT…ILTL, VAFI…LSAP, ILIT…YVQT, FLLG…LVYN, and AVFL…WNSL.

The protein belongs to the major facilitator superfamily. DHA1 family. MdtG (TC 2.A.1.2.20) subfamily.

It is found in the cell inner membrane. Confers resistance to fosfomycin and deoxycholate. The chain is Multidrug resistance protein MdtG from Escherichia coli O6:K15:H31 (strain 536 / UPEC).